We begin with the raw amino-acid sequence, 88 residues long: Small ribosomal subunit protein bS20 (88 aa).

The tract at residues 1 to 20 (MANTAQARKRARQAVVQNAH) is disordered.

It belongs to the bacterial ribosomal protein bS20 family.

Functionally, binds directly to 16S ribosomal RNA. The chain is Small ribosomal subunit protein bS20 from Ralstonia nicotianae (strain ATCC BAA-1114 / GMI1000) (Ralstonia solanacearum).